Here is a 130-residue protein sequence, read N- to C-terminus: Galectin-2 (130 aa).

In terms of domain architecture, Galectin spans 4–130; that stretch reads KFEVKDLNMK…GLQISSFKLE (127 aa). 65-71 contributes to the a beta-D-galactoside binding site; that stretch reads WGQEQRE.

In terms of assembly, homodimer.

Its function is as follows. This protein binds beta-galactoside. Its physiological function is not yet known. This chain is Galectin-2 (Lgals2), found in Mus musculus (Mouse).